The chain runs to 64 residues: Translation machinery-associated protein 7 homolog (64 aa).

The tract at residues Met1 to Lys64 is disordered. Residues Glu21–Gly50 adopt a coiled-coil conformation. The segment covering Lys32–Lys44 has biased composition (basic and acidic residues).

This sequence belongs to the TMA7 family.

The polypeptide is Translation machinery-associated protein 7 homolog (Anopheles gambiae (African malaria mosquito)).